The primary structure comprises 184 residues: Sec-independent protein translocase protein TatB (184 aa).

A helical transmembrane segment spans residues 1–21; it reads MFDIGFSELVLLFVVGLIVLG. Residues 149–168 are compositionally biased toward acidic residues; it reads AEEGEPMLEMGESDFSEDEQ. Positions 149–184 are disordered; sequence AEEGEPMLEMGESDFSEDEQATASSNETIENIKEKV.

It belongs to the TatB family. The Tat system comprises two distinct complexes: a TatABC complex, containing multiple copies of TatA, TatB and TatC subunits, and a separate TatA complex, containing only TatA subunits. Substrates initially bind to the TatABC complex, which probably triggers association of the separate TatA complex to form the active translocon.

It localises to the cell inner membrane. Its function is as follows. Part of the twin-arginine translocation (Tat) system that transports large folded proteins containing a characteristic twin-arginine motif in their signal peptide across membranes. Together with TatC, TatB is part of a receptor directly interacting with Tat signal peptides. TatB may form an oligomeric binding site that transiently accommodates folded Tat precursor proteins before their translocation. The chain is Sec-independent protein translocase protein TatB from Histophilus somni (strain 129Pt) (Haemophilus somnus).